A 276-amino-acid polypeptide reads, in one-letter code: Diaminopimelate epimerase (276 aa).

Substrate-binding residues include Asn-13, Gln-46, and Asn-66. Cys-75 (proton donor) is an active-site residue. Substrate-binding positions include 76–77 (GN), Asn-159, Asn-192, and 210–211 (ER). Cys-219 serves as the catalytic Proton acceptor. 220 to 221 (GT) serves as a coordination point for substrate.

Belongs to the diaminopimelate epimerase family. As to quaternary structure, homodimer.

Its subcellular location is the cytoplasm. The enzyme catalyses (2S,6S)-2,6-diaminopimelate = meso-2,6-diaminopimelate. Its pathway is amino-acid biosynthesis; L-lysine biosynthesis via DAP pathway; DL-2,6-diaminopimelate from LL-2,6-diaminopimelate: step 1/1. In terms of biological role, catalyzes the stereoinversion of LL-2,6-diaminopimelate (L,L-DAP) to meso-diaminopimelate (meso-DAP), a precursor of L-lysine and an essential component of the bacterial peptidoglycan. This chain is Diaminopimelate epimerase, found in Teredinibacter turnerae (strain ATCC 39867 / T7901).